A 148-amino-acid polypeptide reads, in one-letter code: SsrA-binding protein (148 aa).

Residues Ala-119–Gly-148 are disordered. The segment covering Asp-126–Arg-142 has biased composition (basic and acidic residues).

This sequence belongs to the SmpB family.

It is found in the cytoplasm. In terms of biological role, required for rescue of stalled ribosomes mediated by trans-translation. Binds to transfer-messenger RNA (tmRNA), required for stable association of tmRNA with ribosomes. tmRNA and SmpB together mimic tRNA shape, replacing the anticodon stem-loop with SmpB. tmRNA is encoded by the ssrA gene; the 2 termini fold to resemble tRNA(Ala) and it encodes a 'tag peptide', a short internal open reading frame. During trans-translation Ala-aminoacylated tmRNA acts like a tRNA, entering the A-site of stalled ribosomes, displacing the stalled mRNA. The ribosome then switches to translate the ORF on the tmRNA; the nascent peptide is terminated with the 'tag peptide' encoded by the tmRNA and targeted for degradation. The ribosome is freed to recommence translation, which seems to be the essential function of trans-translation. The polypeptide is SsrA-binding protein (Paraburkholderia xenovorans (strain LB400)).